Here is a 1531-residue protein sequence, read N- to C-terminus: MVGPVNIIVGSHVWIEDPGAAWIDGEVVKINGEEVHAHTTNGKTVVANIANVFPKDTEAPPGGVDDMTKLSYLHEPGVLNNLAMRYELNEIYTYTGNILIAVNPFQRLPHLYDTHMMEQYKGAGFGELSPHVFAIAEVAYRAMINEGKSNSILVSGESGAGKTETTKMLMRYLAYLGGRSGVEGRTVEQQVLESNPVLEAFGNAKTLRNNNSSRFGKFVELQFDNCGRISGAAVRTYLLERSRVCQISDPERNYHCFYLLCAAPPEEREKFKLGDPKLFHYLNQSKCYKLDGVDDTEEYLATRRAMDIVGISEEEQDAIFRVVAAILHLGNVNFAKGKEIDSSVLKDEKSRYHLDVCAELLRCDAKKMEDALIKRVMVTPEEVITRTLDPDSATGSRDALAKTIYSRLFDWLVDKINNSIGQDPNSKTIIGVLDIYGFESFKINSFEQFCINFTNEKLQQHFNQHVFKMEQEDYTKEEINWSYIEFVDNKDVLELIEKKPGGVIALLDEACMFPKSTHETFAQKLYQTFKNYKRFTKPKLSRTSFAISHYAGEVTYQADLFLDKNKDYVVAEHQDLLIASSDTFVAGLFPRLPEETSSKTKFSSIGSRFKLQLQSLMETLSSTEPHYIRCVKPNNVLKPAIFENVNVIQQLRCGGVLEAIRISCAGYPTKRTFYEFLNRFGVLAPEVLEGNYDDKVACKMLLDKIGLKGYELGKTKVFLRAGQMAELDARRAEVLGNAARRIQRQSRTFIACKEFRALRGAAIVLQSNCRGKLACNLYEEMRRQAAAVKIQKIFRRHIARESYLRIRHSTITVQTALRGMVARNEFRFRKQMKAATIIQARLRSHLTHSYYKQLQKAALSTQCGWRSRVARKELRTLKMAARDTGALREAKDKLEKRVEELTWRLQLEKRQRTELEEAKTQEYAKQQEALETMRLQVEEANAAVIREREAARKAIEEAPPVIKETPVLVEDTEKINSLTSEVEALKASLQAERQAAENLRKAFSEAEARNSELATELENATRKADQLHESVQRLEEKLSNSESEIQVLRQQALAISPTSRTMATRSKTMLLPRTPENGNYLNGGTKTTPDMTLAVREPESEEKPQKHLNEKQQENQDLLVKCISQNLGYNGDKPVAACVIYKCLLHWRSFEVERTSVFDRIIQTIATAIEVPDNNEVLAYWLSNSATLLLLLQRTLKATGAASLTPQRRRTTSASLFGRMSQGLRGSPQSAGLSFLNRQGLTKLDDLRQVEAKYPALLFKQQLTAFLEKIYGMIRDNLKKEISPLLGLCIQAPRTSRASLVKGRAQANAVAQQALIAHWQSIRKSLNSYLNLMKANNAPPFLVRKVFTQIFSFINVQLFNSLLLRRECCSFSNGEYVKAGLAELEQWCIEATDEYAGSAWDELRHIRQAVGFLVIHQKPKKTLDEITRELCPVLSIQQLYRISTMYWDDKYGTHSVSSDVIANMRVMMTEDSNNAVSSSFLLDDDSSIPFTVEDISKSMQQVDVNDIEPPQLIRENSGFGFLLTRKEGSTS.

Residues Ile-8–Thr-57 form the Myosin N-terminal SH3-like domain. The 671-residue stretch at Gly-62 to Ala-732 folds into the Myosin motor domain. Residues Gly-156 to Thr-163 and Asn-209 to Lys-217 each bind ATP. Actin-binding stretches follow at residues Leu-495–Phe-529, Asn-531–Val-554, Phe-589–Leu-613, and Leu-613–Asn-635. 5 IQ domains span residues Leu-758 to Ala-787, Arg-783 to Thr-812, Ile-806 to Ala-835, Gln-831 to Ser-860, and Leu-854 to Asp-883. The stretch at Thr-884–Ser-1056 forms a coiled coil. The tract at residues Leu-1071–Asp-1090 is disordered. Residues Glu-1076–Asp-1090 show a composition bias toward polar residues. Positions Asp-1159 to Glu-1470 constitute a Dilute domain. The residue at position 1517 (Ser-1517) is a Phosphoserine.

The protein belongs to the TRAFAC class myosin-kinesin ATPase superfamily. Myosin family. Plant myosin class XI subfamily. As to quaternary structure, homodimer. Interacts with MYOB1, MYOB2 and MYOB3. Interacts with PHOX1 and PHOX2. In terms of tissue distribution, expressed ubiquitously.

It is found in the cytoplasm. Its function is as follows. Myosin heavy chain that is required for the cell cycle-regulated transport of various organelles and proteins for their segregation. Functions by binding with its tail domain to receptor proteins on organelles and exerting force with its N-terminal motor domain against actin filaments, thereby transporting its cargo along polarized actin cables. Involved in the tip growth of root hair cells and in the elongation of trichome stalk and branches. Plays a major role in trafficking of Golgi stacks, mitochondria and peroxisomes during root hair development. Acts as the primary contributor to ER streaming with a major role in the movement of Golgi bodies. Required for development of pavement cells, trichomes, and stigmatic papillae. Together with XI-F, required for the regulation of organ bending, such as gravitropic root bending. The chain is Myosin-17 from Arabidopsis thaliana (Mouse-ear cress).